Consider the following 61-residue polypeptide: Large ribosomal subunit protein bL32 (61 aa).

Belongs to the bacterial ribosomal protein bL32 family.

The polypeptide is Large ribosomal subunit protein bL32 (Phytoplasma mali (strain AT)).